Consider the following 188-residue polypeptide: Inactive cysteine S-methyltransferase OspZ (188 aa).

Belongs to the NleE/OspZ family.

It localises to the secreted. The protein resides in the host cytoplasm. Its subcellular location is the host nucleus. Its function is as follows. Inactive effector protein: in contrast to other members of the family, does not have the ability to inhibit host cell NF-kappa-B activation. Probably lacks cysteine S-methyltransferase activity due to its inability to bind S-adenosyl-L-methionine at the C-terminus. In Shigella flexneri, this protein is Inactive cysteine S-methyltransferase OspZ.